The sequence spans 229 residues: Small ribosomal subunit protein uS3 (229 aa).

The KH type-2 domain occupies V39–R107.

This sequence belongs to the universal ribosomal protein uS3 family. In terms of assembly, part of the 30S ribosomal subunit. Forms a tight complex with proteins S10 and S14.

Functionally, binds the lower part of the 30S subunit head. Binds mRNA in the 70S ribosome, positioning it for translation. In Photobacterium profundum (strain SS9), this protein is Small ribosomal subunit protein uS3.